A 122-amino-acid chain; its full sequence is Large ribosomal subunit protein uL14 (122 aa).

Belongs to the universal ribosomal protein uL14 family. Part of the 50S ribosomal subunit. Forms a cluster with proteins L3 and L19. In the 70S ribosome, L14 and L19 interact and together make contacts with the 16S rRNA in bridges B5 and B8.

Binds to 23S rRNA. Forms part of two intersubunit bridges in the 70S ribosome. The chain is Large ribosomal subunit protein uL14 from Paraburkholderia phytofirmans (strain DSM 17436 / LMG 22146 / PsJN) (Burkholderia phytofirmans).